Reading from the N-terminus, the 383-residue chain is Arginine biosynthesis bifunctional protein ArgJ (383 aa).

Substrate-binding residues include Thr-146, Lys-168, Thr-179, Glu-259, Asn-378, and Thr-383. Catalysis depends on Thr-179, which acts as the Nucleophile.

The protein belongs to the ArgJ family. In terms of assembly, heterotetramer of two alpha and two beta chains.

It localises to the cytoplasm. The enzyme catalyses N(2)-acetyl-L-ornithine + L-glutamate = N-acetyl-L-glutamate + L-ornithine. The catalysed reaction is L-glutamate + acetyl-CoA = N-acetyl-L-glutamate + CoA + H(+). The protein operates within amino-acid biosynthesis; L-arginine biosynthesis; L-ornithine and N-acetyl-L-glutamate from L-glutamate and N(2)-acetyl-L-ornithine (cyclic): step 1/1. It participates in amino-acid biosynthesis; L-arginine biosynthesis; N(2)-acetyl-L-ornithine from L-glutamate: step 1/4. Catalyzes two activities which are involved in the cyclic version of arginine biosynthesis: the synthesis of N-acetylglutamate from glutamate and acetyl-CoA as the acetyl donor, and of ornithine by transacetylation between N(2)-acetylornithine and glutamate. The polypeptide is Arginine biosynthesis bifunctional protein ArgJ (Thermobifida fusca (strain YX)).